A 314-amino-acid polypeptide reads, in one-letter code: Malate dehydrogenase (314 aa).

NAD(+)-binding positions include 7-13 (GAAGGIG) and Asp34. Substrate-binding residues include Arg81 and Arg87. Residues Asn94 and 117–119 (ITN) contribute to the NAD(+) site. Substrate-binding residues include Asn119 and Arg153. Catalysis depends on His177, which acts as the Proton acceptor. Met230 serves as a coordination point for NAD(+).

The protein belongs to the LDH/MDH superfamily. MDH type 1 family. In terms of assembly, homodimer.

It carries out the reaction (S)-malate + NAD(+) = oxaloacetate + NADH + H(+). Functionally, catalyzes the reversible oxidation of malate to oxaloacetate. This Glaesserella parasuis serovar 5 (strain SH0165) (Haemophilus parasuis) protein is Malate dehydrogenase.